A 146-amino-acid chain; its full sequence is Large ribosomal subunit protein uL15 (146 aa).

The interval 1 to 54 (MNLTDLRPADGSKQSGNFRRGRGHGSGNGKTAGKGHKGQKARSGAPRVGFEGGQ) is disordered.

This sequence belongs to the universal ribosomal protein uL15 family. As to quaternary structure, part of the 50S ribosomal subunit.

Its function is as follows. Binds to the 23S rRNA. The chain is Large ribosomal subunit protein uL15 from Lachnoclostridium phytofermentans (strain ATCC 700394 / DSM 18823 / ISDg) (Clostridium phytofermentans).